Reading from the N-terminus, the 129-residue chain is RxLR effector protein SFI6 (129 aa).

The first 16 residues, 1 to 16 (MTLVVLATGLLASGTA), serve as a signal peptide directing secretion. Residues 42-64 (RFLRSHQITDDKVEINEHGEEER) carry the RxLR-dEER motif.

The protein belongs to the RxLR effector family.

The protein resides in the secreted. It localises to the host cytoplasm. It is found in the host cell membrane. Effector that suppresses flg22-induced post-translational MAP kinase activation in tomato but not in Arabidopsis. The perception of highly conserved pathogen- or microbe-associated molecular patterns (PAMPs/MAMPs), such as flg22, triggers converging signaling pathways recruiting MAP kinase cascades and inducing transcriptional re-programming, yielding a generic antimicrobial response. This is RxLR effector protein SFI6 from Phytophthora infestans (strain T30-4) (Potato late blight agent).